The primary structure comprises 186 residues: Ribosome-recycling factor (186 aa).

Belongs to the RRF family.

It localises to the cytoplasm. Its function is as follows. Responsible for the release of ribosomes from messenger RNA at the termination of protein biosynthesis. May increase the efficiency of translation by recycling ribosomes from one round of translation to another. The protein is Ribosome-recycling factor of Cupriavidus pinatubonensis (strain JMP 134 / LMG 1197) (Cupriavidus necator (strain JMP 134)).